Consider the following 642-residue polypeptide: tRNA uridine 5-carboxymethylaminomethyl modification enzyme MnmG (642 aa).

24–29 is a binding site for FAD; sequence GGGHAG. Position 284 to 298 (284 to 298) interacts with NAD(+); sequence GPRYCPSIEDKIHRF.

Belongs to the MnmG family. In terms of assembly, homodimer. Heterotetramer of two MnmE and two MnmG subunits. The cofactor is FAD.

Its subcellular location is the cytoplasm. Its function is as follows. NAD-binding protein involved in the addition of a carboxymethylaminomethyl (cmnm) group at the wobble position (U34) of certain tRNAs, forming tRNA-cmnm(5)s(2)U34. The protein is tRNA uridine 5-carboxymethylaminomethyl modification enzyme MnmG of Psychrobacter sp. (strain PRwf-1).